Consider the following 434-residue polypeptide: Beta-enolase (434 aa).

A2 is subject to N-acetylalanine. A Phosphothreonine modification is found at T72. A phosphoserine mark is found at S83 and S157. The substrate site is built by H158 and E167. S176 is subject to Phosphoserine. Position 205 is a phosphothreonine (T205). E210 serves as the catalytic Proton donor. T229 is modified (phosphothreonine). Y236 is subject to Phosphotyrosine. D245 provides a ligand contact to Mg(2+). S263 carries the phosphoserine modification. Residues E293 and D318 each contribute to the substrate site. Mg(2+)-binding residues include E293 and D318. K343 serves as the catalytic Proton acceptor. Residues 370–373 (SHRS) and K394 contribute to the substrate site.

Belongs to the enolase family. As to quaternary structure, mammalian enolase is composed of 3 isozyme subunits, alpha, beta and gamma, which can form homodimers or heterodimers which are cell-type and development-specific. Interacts with PNKD. Mg(2+) is required as a cofactor.

Its subcellular location is the cytoplasm. The enzyme catalyses (2R)-2-phosphoglycerate = phosphoenolpyruvate + H2O. It functions in the pathway carbohydrate degradation; glycolysis; pyruvate from D-glyceraldehyde 3-phosphate: step 4/5. In terms of biological role, glycolytic enzyme that catalyzes the conversion of 2-phosphoglycerate to phosphoenolpyruvate. Appears to have a function in striated muscle development and regeneration. The chain is Beta-enolase (ENO3) from Sus scrofa (Pig).